Consider the following 289-residue polypeptide: Putative 2-aminoethylphosphonate transport system permease protein PhnU (289 aa).

Helical transmembrane passes span 19-39 (WLLL…SLIV), 76-96 (FFAT…LVFI), 111-131 (FIAL…GSAG), 150-170 (FLYS…PLVM), 202-222 (VIFP…LLLT), and 254-274 (YTVA…LFSL). The ABC transmembrane type-1 domain occupies 68 to 275 (LLNTLQIAFF…VLSLGLFSLY (208 aa)).

It belongs to the binding-protein-dependent transport system permease family.

The protein resides in the cell inner membrane. Probably part of the PhnSTUV complex (TC 3.A.1.11.5) involved in 2-aminoethylphosphonate import. Probably responsible for the translocation of the substrate across the membrane. The polypeptide is Putative 2-aminoethylphosphonate transport system permease protein PhnU (phnU) (Salmonella paratyphi A (strain ATCC 9150 / SARB42)).